We begin with the raw amino-acid sequence, 172 residues long: Adenine phosphoribosyltransferase (172 aa).

The protein belongs to the purine/pyrimidine phosphoribosyltransferase family. Homodimer.

It is found in the cytoplasm. The catalysed reaction is AMP + diphosphate = 5-phospho-alpha-D-ribose 1-diphosphate + adenine. It participates in purine metabolism; AMP biosynthesis via salvage pathway; AMP from adenine: step 1/1. Functionally, catalyzes a salvage reaction resulting in the formation of AMP, that is energically less costly than de novo synthesis. The chain is Adenine phosphoribosyltransferase from Staphylococcus haemolyticus (strain JCSC1435).